The chain runs to 217 residues: MKVFEFLKGKRGAMGIGTLIIFIAMVLVAAVAAAVLINTSGFLQQKAMATGKESTEQVASGLSTLQVIGIHDNKAINYLAIYITPNAGSAAIDLNQTKILITDGEKKAVLRYNSNAYADLTTGGEVTNTSLAAWNLSGGEFGIIVLQDADGSCKSTTPVINKGDIVALTINASAVGLNLVPRTTVTGSVIPEFGAPAVIEFTTPAAYLSTQEVIQLQ.

Positions 1–12 (MKVFEFLKGKRG) are excised as a propeptide.

Belongs to the archaeal flagellin family.

The protein resides in the archaeal flagellum. Flagellin is the subunit protein which polymerizes to form the filaments of archaeal flagella. This is Flagellin B2 (flaB2) from Methanocaldococcus jannaschii (strain ATCC 43067 / DSM 2661 / JAL-1 / JCM 10045 / NBRC 100440) (Methanococcus jannaschii).